A 152-amino-acid chain; its full sequence is Inner membrane protein YbbJ (152 aa).

A helical membrane pass occupies residues methionine 1–leucine 21. At alanine 22–tyrosine 31 the chain is on the cytoplasmic side. The chain crosses the membrane as a helical span at residues leucine 32–glycine 52. Over tryptophan 53 to glutamate 54 the chain is Periplasmic. The helical transmembrane segment at tryptophan 55–leucine 75 threads the bilayer. Topologically, residues serine 76–serine 152 are cytoplasmic.

This sequence to M.jannaschii MJ0826.

The protein resides in the cell inner membrane. The protein is Inner membrane protein YbbJ (ybbJ) of Escherichia coli (strain K12).